The chain runs to 425 residues: Dihydroorotase (425 aa).

2 residues coordinate Zn(2+): H59 and H61. Substrate is bound by residues 61 to 63 and N93; that span reads HLR. Zn(2+) contacts are provided by D151, H178, and H231. N277 contacts substrate. D304 provides a ligand contact to Zn(2+). Residue D304 is part of the active site. Residues H308 and 322-323 contribute to the substrate site; that span reads FG.

It belongs to the metallo-dependent hydrolases superfamily. DHOase family. Class I DHOase subfamily. Requires Zn(2+) as cofactor.

The enzyme catalyses (S)-dihydroorotate + H2O = N-carbamoyl-L-aspartate + H(+). Its pathway is pyrimidine metabolism; UMP biosynthesis via de novo pathway; (S)-dihydroorotate from bicarbonate: step 3/3. Functionally, catalyzes the reversible cyclization of carbamoyl aspartate to dihydroorotate. This Staphylococcus epidermidis (strain ATCC 35984 / DSM 28319 / BCRC 17069 / CCUG 31568 / BM 3577 / RP62A) protein is Dihydroorotase.